The sequence spans 110 residues: MNYANFGLELFKSIADAAYEGKRVELAGKTLALKNRALDTERDYNYARLAFEKQRFETNADLRVNGDLYRMQALRAAGYRLNPFSNGHQIYADEAAAANLHSYYGFYKTD.

It belongs to the vesivirus VP2 protein family. As to quaternary structure, homooligomer. The portal-like structure consists in 12 copies of VP2. Interacts with capsid protein VP1.

It is found in the virion. It localises to the host cytoplasm. In terms of biological role, minor structural protein that forms a portal-like structure at a unique three-fold axis of symmetry, following binding to the host receptor. The channel formed by VP2 may allow the delivery of the viral genome through the host endosomal membrane. This chain is Minor capsid protein VP2, found in Otariidae (fur seals &amp; sea lions).